A 227-amino-acid polypeptide reads, in one-letter code: Ribonuclease 3 (227 aa).

One can recognise an RNase III domain in the interval 3 to 130; that stretch reads TNAISKIIKY…LIGAIYLDGG (128 aa). E43 contributes to the Mg(2+) binding site. D47 is a catalytic residue. Positions 116 and 119 each coordinate Mg(2+). E119 is an active-site residue. One can recognise a DRBM domain in the interval 155–224; the sequence is DAKTILQEWA…ASLMLAKINY (70 aa).

Belongs to the ribonuclease III family. As to quaternary structure, homodimer. The cofactor is Mg(2+).

It localises to the cytoplasm. The catalysed reaction is Endonucleolytic cleavage to 5'-phosphomonoester.. Its function is as follows. Digests double-stranded RNA. Involved in the processing of primary rRNA transcript to yield the immediate precursors to the large and small rRNAs (23S and 16S). Processes some mRNAs, and tRNAs when they are encoded in the rRNA operon. Processes pre-crRNA and tracrRNA of type II CRISPR loci if present in the organism. The chain is Ribonuclease 3 from Ehrlichia ruminantium (strain Gardel).